The sequence spans 145 residues: 3-hydroxyacyl-[acyl-carrier-protein] dehydratase FabZ (145 aa).

H51 is an active-site residue.

The protein belongs to the thioester dehydratase family. FabZ subfamily.

It is found in the cytoplasm. It carries out the reaction a (3R)-hydroxyacyl-[ACP] = a (2E)-enoyl-[ACP] + H2O. Functionally, involved in unsaturated fatty acids biosynthesis. Catalyzes the dehydration of short chain beta-hydroxyacyl-ACPs and long chain saturated and unsaturated beta-hydroxyacyl-ACPs. The chain is 3-hydroxyacyl-[acyl-carrier-protein] dehydratase FabZ from Staphylococcus carnosus (strain TM300).